The following is a 449-amino-acid chain: uncharacterized protein (449 aa).

The TRAM domain maps to 3–61 (VWQQGATIELRIDSLSHTGEGVGRWQDRVVFVADTVPGDRLRVRLTHVKRQYAHGKVLE). 4 residues coordinate [4Fe-4S] cluster: cysteine 74, cysteine 80, cysteine 83, and cysteine 161. Positions 283, 312, 333, and 378 each coordinate S-adenosyl-L-methionine. The active-site Nucleophile is cysteine 405.

This sequence belongs to the class I-like SAM-binding methyltransferase superfamily. RNA M5U methyltransferase family.

This is an uncharacterized protein from Thermosynechococcus vestitus (strain NIES-2133 / IAM M-273 / BP-1).